The primary structure comprises 202 residues: Indolepyruvate oxidoreductase subunit IorB (202 aa).

As to quaternary structure, heterodimer of the IorA and IorB subunits.

The enzyme catalyses indole-3-pyruvate + 2 oxidized [2Fe-2S]-[ferredoxin] + CoA = (indol-3-yl)acetyl-CoA + 2 reduced [2Fe-2S]-[ferredoxin] + CO2 + H(+). Catalyzes the ferredoxin-dependent oxidative decarboxylation of arylpyruvates. This chain is Indolepyruvate oxidoreductase subunit IorB (iorB), found in Thermococcus kodakarensis (strain ATCC BAA-918 / JCM 12380 / KOD1) (Pyrococcus kodakaraensis (strain KOD1)).